Reading from the N-terminus, the 496-residue chain is E3 ubiquitin-protein ligase XIAP (496 aa).

BIR repeat units follow at residues 26 to 93, 163 to 230, and 264 to 329; these read EFNR…CRFI, EEAR…CFFV, and YDAR…CKYL. 3 residues coordinate Zn(2+): cysteine 299, cysteine 302, and histidine 319. Residue lysine 321 forms a Glycyl lysine isopeptide (Lys-Gly) (interchain with G-Cter in ubiquitin) linkage. Residue cysteine 326 participates in Zn(2+) binding. Lysine 327 participates in a covalent cross-link: Glycyl lysine isopeptide (Lys-Gly) (interchain with G-Cter in ubiquitin). An S-nitrosocysteine modification is found at cysteine 449. An RING-type zinc finger spans residues 449 to 484; it reads CKICMDRNIAIVFVPCGHLVTCKQCAEAVDKCPMCC.

It belongs to the IAP family. Monomer, and homodimer. Interacts (via BIR3 domain) with DIABLO/SMAC; the interaction inhibits apoptotic suppressor activity. Interacts with HTRA2/PRSS25; the interaction inhibits apoptotic suppressor activity. Interacts with TAB1/MAP3K7IP1 and AIFM1. Interaction with DIABLO/SMAC hinders binding of TAB1/MAP3K7IP1 and AIFM1. Interacts with TCF25 and COMMD1. Interacts (via BIR3 domain) with SEPTIN4. Interacts with RIP1, RIP2, RIP3, RIP4, CCS and USP19. Interacts (via BIR 2 domain and BIR 3 domain) with HAX1 (via C-terminus) and this interaction blocks ubiquitination of XIAP/BIRC4. Interacts with the monomeric form of BIRC5/survivin. Interacts with TLE3 and TCF7L2/TCF4. Interacts (via BIR 3 and RING domains) with PDCL3. S-Nitrosylation down-regulates its E3 ubiquitin-protein ligase activity. Post-translationally, autoubiquitinated. Ubiquitinated by TRIM32; leading to proteasomal degradation.

It is found in the cytoplasm. The protein resides in the nucleus. The enzyme catalyses S-ubiquitinyl-[E2 ubiquitin-conjugating enzyme]-L-cysteine + [acceptor protein]-L-lysine = [E2 ubiquitin-conjugating enzyme]-L-cysteine + N(6)-ubiquitinyl-[acceptor protein]-L-lysine.. Functionally, multi-functional protein which regulates not only caspases and apoptosis, but also modulates inflammatory signaling and immunity, copper homeostasis, mitogenic kinase signaling, cell proliferation, as well as cell invasion and metastasis. Acts as a direct caspase inhibitor. Directly bind to the active site pocket of CASP3 and CASP7 and obstructs substrate entry. Inactivates CASP9 by keeping it in a monomeric, inactive state. Acts as an E3 ubiquitin-protein ligase regulating NF-kappa-B signaling and the target proteins for its E3 ubiquitin-protein ligase activity include: RIPK1, RIPK2, MAP3K2/MEKK2, DIABLO/SMAC, AIFM1, CCS, PTEN and BIRC5/survivin. Acts as an important regulator of innate immunity by mediating 'Lys-63'-linked polyubiquitination of RIPK2 downstream of NOD1 and NOD2, thereby transforming RIPK2 into a scaffolding protein for downstream effectors, ultimately leading to activation of the NF-kappa-B and MAP kinases signaling. 'Lys-63'-linked polyubiquitination of RIPK2 also promotes recruitment of the LUBAC complex to RIPK2. Regulates the BMP signaling pathway and the SMAD and MAP3K7/TAK1 dependent pathways leading to NF-kappa-B and JNK activation. Ubiquitination of CCS leads to enhancement of its chaperone activity toward its physiologic target, SOD1, rather than proteasomal degradation. Ubiquitination of MAP3K2/MEKK2 and AIFM1 does not lead to proteasomal degradation. Plays a role in copper homeostasis by ubiquitinating COMMD1 and promoting its proteasomal degradation. Can also function as E3 ubiquitin-protein ligase of the NEDD8 conjugation pathway, targeting effector caspases for neddylation and inactivation. Ubiquitinates and therefore mediates the proteasomal degradation of BCL2 in response to apoptosis. Protects cells from spontaneous formation of the ripoptosome, a large multi-protein complex that has the capability to kill cancer cells in a caspase-dependent and caspase-independent manner. Suppresses ripoptosome formation by ubiquitinating RIPK1 and CASP8. Acts as a positive regulator of Wnt signaling and ubiquitinates TLE1, TLE2, TLE3, TLE4 and AES. Ubiquitination of TLE3 results in inhibition of its interaction with TCF7L2/TCF4 thereby allowing efficient recruitment and binding of the transcriptional coactivator beta-catenin to TCF7L2/TCF4 that is required to initiate a Wnt-specific transcriptional program. This is E3 ubiquitin-protein ligase XIAP (Xiap) from Rattus norvegicus (Rat).